The sequence spans 255 residues: Pyrroloquinoline-quinone synthase (255 aa).

This sequence belongs to the PqqC family.

The catalysed reaction is 6-(2-amino-2-carboxyethyl)-7,8-dioxo-1,2,3,4,7,8-hexahydroquinoline-2,4-dicarboxylate + 3 O2 = pyrroloquinoline quinone + 2 H2O2 + 2 H2O + H(+). The protein operates within cofactor biosynthesis; pyrroloquinoline quinone biosynthesis. Functionally, ring cyclization and eight-electron oxidation of 3a-(2-amino-2-carboxyethyl)-4,5-dioxo-4,5,6,7,8,9-hexahydroquinoline-7,9-dicarboxylic-acid to PQQ. This Acinetobacter baylyi (strain ATCC 33305 / BD413 / ADP1) protein is Pyrroloquinoline-quinone synthase.